Consider the following 540-residue polypeptide: MADISTTQVWQDLTDHYSNFQATTLRELFKEENRAEKYTFSAAGLHVDLSKNLLDDATLTKLLALTEESGLRERIDAMFAGEHLNNTEDRAVLHTALRLPAEADLSVDGQDVAADVHEVLGRMRDFATALRSGNWLGHTGHTIKKIVNIGIGGSDLGPAMATKALRAYATAGISAEFVSNVDPADLVSVLEDLDAESTLFVIASKTFTTQETLSNARAARAWLVEKLGEEAVAKHFVAVSTNAEKVAEFGIDTDNMFGFWDWVGGRYSVDSAVGLSLMAVIGPRDFMRFLGGFHAMDEHFRTTKFEENVPILMALLGVWYSDFYGAETHAVLPYSEDLSRFAAYLQQLTMESNGKSVHRDGSPVSTGTGEIYWGEPGTNGQHAFFQLIHQGTRLVPADFIGFARPKQDLPAGERTMHDLLMSNFFAQTKVLAFGKNAEEIAAEGVAPELVNHKVMPGNRPTTTILAEELTPSILGALIALYEHIVMVQGVIWDINSFDQWGVELGKQQANDLAPAVSGEEDVDSGDSSTDSLIKWYRANR.

Catalysis depends on glutamate 351, which acts as the Proton donor. Residues histidine 382 and lysine 506 contribute to the active site.

It belongs to the GPI family.

It is found in the cytoplasm. It catalyses the reaction alpha-D-glucose 6-phosphate = beta-D-fructose 6-phosphate. It functions in the pathway carbohydrate biosynthesis; gluconeogenesis. Its pathway is carbohydrate degradation; glycolysis; D-glyceraldehyde 3-phosphate and glycerone phosphate from D-glucose: step 2/4. In terms of biological role, catalyzes the reversible isomerization of glucose-6-phosphate to fructose-6-phosphate. The chain is Glucose-6-phosphate isomerase from Corynebacterium glutamicum (strain ATCC 13032 / DSM 20300 / JCM 1318 / BCRC 11384 / CCUG 27702 / LMG 3730 / NBRC 12168 / NCIMB 10025 / NRRL B-2784 / 534).